A 223-amino-acid chain; its full sequence is Interleukin-12 subunit alpha (223 aa).

A signal peptide spans 1-23 (MCPSARSLLLLASLVLLEHLGSA). Residues asparagine 41, asparagine 79, asparagine 121, and asparagine 176 are each glycosylated (N-linked (GlcNAc...) asparagine). 2 disulfide bridges follow: cysteine 66/cysteine 200 and cysteine 87/cysteine 125.

This sequence belongs to the IL-6 superfamily. As to quaternary structure, heterodimer with IL12B; disulfide-linked. This heterodimer is known as interleukin IL-12. Heterodimer with EBI3/IL27B; not disulfide-linked. This heterodimer is known as interleukin IL-35. Interacts with NBR1; this interaction promotes IL-12 secretion.

It is found in the secreted. Functionally, heterodimerizes with IL12B to form the IL-12 cytokine or with EBI3/IL27B to form the IL-35 cytokine. IL-12 is primarily produced by professional antigen-presenting cells (APCs) such as B-cells and dendritic cells (DCs) as well as macrophages and granulocytes and regulates T-cell and natural killer-cell responses, induces the production of interferon-gamma (IFN-gamma), favors the differentiation of T-helper 1 (Th1) cells and is an important link between innate resistance and adaptive immunity. Mechanistically, exerts its biological effects through a receptor composed of IL12R1 and IL12R2 subunits. Binding to the receptor results in the rapid tyrosine phosphorylation of a number of cellular substrates including the JAK family kinases TYK2 and JAK2. In turn, recruited STAT4 gets phosphorylated and translocates to the nucleus where it regulates cytokine/growth factor responsive genes. As part of IL-35, plays essential roles in maintaining the immune homeostasis of the liver microenvironment and also functions as an immune-suppressive cytokine. Mediates biological events through unconventional receptors composed of IL12RB2 and gp130/IL6ST heterodimers or homodimers. Signaling requires the transcription factors STAT1 and STAT4, which form a unique heterodimer that binds to distinct DNA sites. This chain is Interleukin-12 subunit alpha (IL12A), found in Marmota monax (Woodchuck).